The primary structure comprises 544 residues: Chaperonin GroEL 1 (544 aa).

ATP-binding positions include 29-32 (TLGP), 86-90 (DGTTT), Gly413, 479-481 (NAA), and Asp495.

This sequence belongs to the chaperonin (HSP60) family. In terms of assembly, forms a cylinder of 14 subunits composed of two heptameric rings stacked back-to-back. Interacts with the co-chaperonin GroES.

It localises to the cytoplasm. It carries out the reaction ATP + H2O + a folded polypeptide = ADP + phosphate + an unfolded polypeptide.. Together with its co-chaperonin GroES, plays an essential role in assisting protein folding. The GroEL-GroES system forms a nano-cage that allows encapsulation of the non-native substrate proteins and provides a physical environment optimized to promote and accelerate protein folding. This Synechococcus sp. (strain CC9902) protein is Chaperonin GroEL 1.